We begin with the raw amino-acid sequence, 387 residues long: 2-deoxystreptamine glucosyltransferase (387 aa).

It belongs to the glycosyltransferase group 1 family.

The catalysed reaction is 2-deoxystreptamine + UDP-N-acetyl-alpha-D-glucosamine = 2'-N-acetylparomamine + UDP + H(+). It catalyses the reaction 2-deoxystreptamine + UDP-alpha-D-glucose = 2'-deamino-2'-hydroxyparomamine + UDP + H(+). It functions in the pathway antibiotic biosynthesis; kanamycin biosynthesis. In terms of biological role, glycosyltransferase involved in the biosynthesis of kanamycin by mediating conversion of 2-deoxystreptamine (2-DOS) to 2'-N-acetylparomamine using UDP-alpha-D-glucose as sugar donor. Can also accept UDP-alpha-D-glucosamine, but with a much lower activity compared to UDP-alpha-D-glucose. In Streptomyces kanamyceticus, this protein is 2-deoxystreptamine glucosyltransferase (kanF).